The sequence spans 521 residues: Amidase (521 aa).

Active-site charge relay system residues include K96 and S171. Residues 155–174 (SGPVRNPWDRQREAGGSSGG) form a disordered region. The active-site Acyl-ester intermediate is the S195.

The protein belongs to the amidase family. In terms of assembly, homodimer.

It catalyses the reaction a monocarboxylic acid amide + H2O = a monocarboxylate + NH4(+). Functionally, hydrolyzes propionamides efficiently, and also at a lower efficiency, acetamide, acrylamide and indoleacetamide. This enzyme seems to be stereospecific and can lead to the production of a single enantiomer. This Rhodococcus erythropolis (Arthrobacter picolinophilus) protein is Amidase (amdA).